The primary structure comprises 284 residues: Bifunctional protein FolD (284 aa).

NADP(+)-binding positions include 166–168 (GAS) and Ile-232.

The protein belongs to the tetrahydrofolate dehydrogenase/cyclohydrolase family. As to quaternary structure, homodimer.

It carries out the reaction (6R)-5,10-methylene-5,6,7,8-tetrahydrofolate + NADP(+) = (6R)-5,10-methenyltetrahydrofolate + NADPH. The enzyme catalyses (6R)-5,10-methenyltetrahydrofolate + H2O = (6R)-10-formyltetrahydrofolate + H(+). The protein operates within one-carbon metabolism; tetrahydrofolate interconversion. In terms of biological role, catalyzes the oxidation of 5,10-methylenetetrahydrofolate to 5,10-methenyltetrahydrofolate and then the hydrolysis of 5,10-methenyltetrahydrofolate to 10-formyltetrahydrofolate. The protein is Bifunctional protein FolD of Pseudomonas putida (strain W619).